A 311-amino-acid polypeptide reads, in one-letter code: Glycine-betaine-binding protein (311 aa).

The first 23 residues, M1–A23, serve as a signal peptide directing secretion.

The protein belongs to the OsmX family.

The protein resides in the periplasm. In terms of biological role, binds glycine-betaine. The sequence is that of Glycine-betaine-binding protein from Pseudomonas aeruginosa (strain ATCC 15692 / DSM 22644 / CIP 104116 / JCM 14847 / LMG 12228 / 1C / PRS 101 / PAO1).